Reading from the N-terminus, the 74-residue chain is Antimicrobial peptide AcrAP2 (74 aa).

The signal sequence occupies residues 1-22 (MEIKYLLTVFLVLLIVSDHCQA). At Lys40 the chain carries Lysine amide. Positions 46–74 (NLDGQIDRFRNFRKRDAELEELLSKLPIY) are excised as a propeptide.

It belongs to the non-disulfide-bridged peptide (NDBP) superfamily. Short antimicrobial peptide (group 4) family. In terms of tissue distribution, expressed by the venom gland.

It is found in the secreted. Its subcellular location is the target cell membrane. Has antimicrobial activity against the Gram-positive bacteria S.aureus (MIC=8 uM) and the yeast C.albicans (MIC=16 uM). Causes hemolysis on horse erythrocytes (64 uM for 100% hemolysis). Minimum bactericidal concentrations have also been tested against S.aureus and is four-fold higher (MBC=32 uM). This Androctonus crassicauda (Arabian fat-tailed scorpion) protein is Antimicrobial peptide AcrAP2.